The following is a 466-amino-acid chain: Uronate isomerase (466 aa).

Belongs to the metallo-dependent hydrolases superfamily. Uronate isomerase family.

It catalyses the reaction D-glucuronate = D-fructuronate. The catalysed reaction is aldehydo-D-galacturonate = keto-D-tagaturonate. It functions in the pathway carbohydrate metabolism; pentose and glucuronate interconversion. The chain is Uronate isomerase from Streptococcus pneumoniae (strain 70585).